The primary structure comprises 257 residues: Thioredoxin-dependent peroxide reductase, mitochondrial (257 aa).

The N-terminal 62 residues, Met1 to His62, are a transit peptide targeting the mitochondrion. One can recognise a Thioredoxin domain in the interval Pro64 to Phe222. The residue at position 84 (Lys84) is an N6-succinyllysine. Lys92 carries the post-translational modification N6-acetyllysine; alternate. Residue Lys92 is modified to N6-succinyllysine; alternate. Cys109 (cysteine sulfenic acid (-SOH) intermediate) is an active-site residue. A Phosphothreonine modification is found at Thr147.

Belongs to the peroxiredoxin family. AhpC/Prx1 subfamily. As to quaternary structure, homodimer; disulfide-linked, upon oxidation. 6 homodimers assemble to form a ring-like dodecamer. Interacts with NEK6. Interacts with LRRK2. Interacts with MAP3K13. Interacts with RPS6KC1 (via PX domain). In terms of processing, phosphorylated by LRRK2; phosphorylation reduces perodixase activity. The enzyme can be inactivated by further oxidation of the cysteine sulfenic acid (C(P)-SOH) to sulphinic acid (C(P)-SO2H) and sulphonic acid (C(P)-SO3H) instead of its condensation to a disulfide bond. Post-translationally, S-palmitoylated. Ubiquitous.

Its subcellular location is the mitochondrion. It is found in the cytoplasm. It localises to the early endosome. The enzyme catalyses a hydroperoxide + [thioredoxin]-dithiol = an alcohol + [thioredoxin]-disulfide + H2O. Functionally, thiol-specific peroxidase that catalyzes the reduction of hydrogen peroxide and organic hydroperoxides to water and alcohols, respectively. Plays a role in cell protection against oxidative stress by detoxifying peroxides. Acts synergistically with MAP3K13 to regulate the activation of NF-kappa-B in the cytosol. Required for the maintenance of physical strength. This is Thioredoxin-dependent peroxide reductase, mitochondrial (Prdx3) from Rattus norvegicus (Rat).